The primary structure comprises 379 residues: Tryptophan 2,3-dioxygenase (379 aa).

Substrate is bound by residues 57–61 (FIITH) and Arg128. His312 provides a ligand contact to heme. A substrate-binding site is contributed by Thr327.

The protein belongs to the tryptophan 2,3-dioxygenase family. As to quaternary structure, homotetramer. Dimer of dimers. Requires heme as cofactor.

The enzyme catalyses L-tryptophan + O2 = N-formyl-L-kynurenine. The protein operates within amino-acid degradation; L-tryptophan degradation via kynurenine pathway; L-kynurenine from L-tryptophan: step 1/2. It participates in pigment biosynthesis; ommochrome biosynthesis. In terms of biological role, heme-dependent dioxygenase that catalyzes the oxidative cleavage of the L-tryptophan (L-Trp) pyrrole ring and converts L-tryptophan to N-formyl-L-kynurenine. Catalyzes the oxidative cleavage of the indole moiety. The chain is Tryptophan 2,3-dioxygenase from Drosophila yakuba (Fruit fly).